Here is a 938-residue protein sequence, read N- to C-terminus: Isoleucine--tRNA ligase (938 aa).

Positions Pro-58–His-68 match the 'HIGH' region motif. Lys-183 is subject to N6-acetyllysine. Glu-561 is an L-isoleucyl-5'-AMP binding site. Positions Lys-602–Ser-606 match the 'KMSKS' region motif. Lys-605 lines the ATP pocket. Positions 901, 904, 921, and 924 each coordinate Zn(2+).

The protein belongs to the class-I aminoacyl-tRNA synthetase family. IleS type 1 subfamily. In terms of assembly, monomer. The cofactor is Zn(2+).

Its subcellular location is the cytoplasm. The catalysed reaction is tRNA(Ile) + L-isoleucine + ATP = L-isoleucyl-tRNA(Ile) + AMP + diphosphate. Catalyzes the attachment of isoleucine to tRNA(Ile). As IleRS can inadvertently accommodate and process structurally similar amino acids such as valine, to avoid such errors it has two additional distinct tRNA(Ile)-dependent editing activities. One activity is designated as 'pretransfer' editing and involves the hydrolysis of activated Val-AMP. The other activity is designated 'posttransfer' editing and involves deacylation of mischarged Val-tRNA(Ile). This chain is Isoleucine--tRNA ligase, found in Escherichia coli (strain ATCC 8739 / DSM 1576 / NBRC 3972 / NCIMB 8545 / WDCM 00012 / Crooks).